We begin with the raw amino-acid sequence, 279 residues long: Dehydrogenase/reductase SDR family member 4 (279 aa).

Residue 37-61 coordinates NADP(+); it reads LVTASTDGIGLAIARRLAQDGAHVV. Lys93 carries the N6-acetyllysine; alternate modification. At Lys93 the chain carries N6-succinyllysine; alternate. Residue Ser170 participates in substrate binding. The active-site Proton acceptor is Tyr183. Residue Lys187 participates in NADP(+) binding. An N6-acetyllysine; alternate modification is found at Lys217. An N6-succinyllysine; alternate modification is found at Lys217. Residue Ser221 is modified to Phosphoserine. N6-succinyllysine is present on residues Lys228 and Lys235. The Peroxisomal targeting signal motif lies at 277–279; that stretch reads SRL.

It belongs to the short-chain dehydrogenases/reductases (SDR) family. As to quaternary structure, homotetramer. Detected in heart, kidney, liver and small intestine. Detected at lower levels in brain, lung, stomach and spleen.

The protein localises to the peroxisome. The catalysed reaction is a secondary alcohol + NADP(+) = a ketone + NADPH + H(+). The enzyme catalyses 3alpha-hydroxy-5beta-pregnan-20-one + NADP(+) = 5beta-pregnan-3,20-dione + NADPH + H(+). It catalyses the reaction 5beta-dihydrotestosterone + NADPH + H(+) = 5beta-androstane-3alpha,17beta-diol + NADP(+). It carries out the reaction all-trans-retinol + NADP(+) = all-trans-retinal + NADPH + H(+). The catalysed reaction is isatin + NADPH + H(+) = 3-hydroxyindolin-2-one + NADP(+). Its activity is regulated as follows. Inhibited by kaempferol, quercetin, genistein and myristic acid. NADPH-dependent oxidoreductase which catalyzes the reduction of a variety of compounds bearing carbonyl groups including ketosteroids, alpha-dicarbonyl compounds, aldehydes, aromatic ketones and quinones. Reduces all-trans-retinal and 9-cis retinal. Reduces 3-ketosteroids and benzil into 3alpha-hydroxysteroids and S-benzoin, respectively, in contrast to the stereoselectivity of primates DHRS4s which produce 3beta-hydroxysteroids and R-benzoin. In the reverse reaction, catalyzes the NADP-dependent oxidation of 3alpha-hydroxysteroids and alcohol, but with much lower efficiency. Involved in the metabolism of 3alpha-hydroxysteroids, retinoid, isatin and xenobiotic carbonyl compounds. The chain is Dehydrogenase/reductase SDR family member 4 (DHRS4) from Sus scrofa (Pig).